We begin with the raw amino-acid sequence, 214 residues long: Adenylate kinase (214 aa).

10–15 is a binding site for ATP; sequence GAGKGT. The NMP stretch occupies residues 30–59; sequence STGDMLRAAIKAGTELGKQAKAVIDAGQLV. AMP is bound by residues threonine 31, arginine 36, 57–59, 85–88, and glutamine 92; these read QLV and GFPR. The tract at residues 122–159 is LID; sequence GRRAHLPSGRTYHVVYNPPKVEGKDDVTGEDLVVRDDD. Residues arginine 123 and 132–133 contribute to the ATP site; that span reads TY. The AMP site is built by arginine 156 and arginine 167. Position 200 (lysine 200) interacts with ATP.

Belongs to the adenylate kinase family. In terms of assembly, monomer.

Its subcellular location is the cytoplasm. The catalysed reaction is AMP + ATP = 2 ADP. It functions in the pathway purine metabolism; AMP biosynthesis via salvage pathway; AMP from ADP: step 1/1. Catalyzes the reversible transfer of the terminal phosphate group between ATP and AMP. Plays an important role in cellular energy homeostasis and in adenine nucleotide metabolism. This is Adenylate kinase from Vibrio parahaemolyticus serotype O3:K6 (strain RIMD 2210633).